Here is a 582-residue protein sequence, read N- to C-terminus: Cryptochrome DASH, chloroplastic/mitochondrial (582 aa).

The transit peptide at 1-49 (MLHFLSSSSPLNPQFLLLPRQSARLRVLLSIPVSAMSSSSSSSSRGALA) directs the protein to the chloroplast and mitochondrion. A Photolyase/cryptochrome alpha/beta domain is found at 84-234 (GVAIVWFRND…KLQLIWGATL (151 aa)). A disordered region spans residues 560-582 (GHQKRDQQFNRQRRPGHMYRRQK). Residues 570–582 (RQRRPGHMYRRQK) show a composition bias toward basic residues.

It belongs to the DNA photolyase class-1 family. Requires FAD as cofactor. (6R)-5,10-methylene-5,6,7,8-tetrahydrofolate is required as a cofactor.

The protein localises to the plastid. The protein resides in the chloroplast. It localises to the mitochondrion. Its function is as follows. May have a photoreceptor function. Binds ss- and ds-DNA in a sequence non-specific manner, lacks photolyase activity. The protein is Cryptochrome DASH, chloroplastic/mitochondrial (CRYD) of Oryza sativa subsp. japonica (Rice).